A 197-amino-acid chain; its full sequence is Probable GTP-binding protein EngB (197 aa).

An EngB-type G domain is found at 22-197; the sequence is TGVEVAFAGR…LKEKLDIWYQ (176 aa). Residues 30–37, 57–61, 75–78, 142–145, and 177–179 contribute to the GTP site; these read GRSNAGKS, GRTQL, DLPG, TKAD, and FSS. Mg(2+)-binding residues include Ser37 and Thr59.

The protein belongs to the TRAFAC class TrmE-Era-EngA-EngB-Septin-like GTPase superfamily. EngB GTPase family. Mg(2+) serves as cofactor.

Necessary for normal cell division and for the maintenance of normal septation. This chain is Probable GTP-binding protein EngB, found in Francisella philomiragia subsp. philomiragia (strain ATCC 25017 / CCUG 19701 / FSC 153 / O#319-036).